Here is a 184-residue protein sequence, read N- to C-terminus: Adenylate kinase 2 (184 aa).

10–15 (GSGKST) provides a ligand contact to ATP. The tract at residues 30–59 (STGEILREAISHLSELGRHAQPYMIKGELV) is NMP. AMP contacts are provided by residues T31, R36, 57 to 59 (ELV), 85 to 88 (GYPR), and Q92. Residues 126-132 (GRSLPDD) are LID. R127 contributes to the ATP binding site. AMP is bound at residue R140. Position 168 (Q168) interacts with ATP.

This sequence belongs to the adenylate kinase family. Monomer.

Its subcellular location is the cytoplasm. It carries out the reaction AMP + ATP = 2 ADP. It functions in the pathway purine metabolism; AMP biosynthesis via salvage pathway; AMP from ADP: step 1/1. In terms of biological role, catalyzes the reversible transfer of the terminal phosphate group between ATP and AMP. Plays an important role in cellular energy homeostasis and in adenine nucleotide metabolism. This is Adenylate kinase 2 from Nostoc sp. (strain PCC 7120 / SAG 25.82 / UTEX 2576).